A 548-amino-acid polypeptide reads, in one-letter code: MAAKDVKFGNEARIKMLRGVNVLADAVKVTLGPKGRNVVLDKSFGAPSITKDGVSVAREIELEDKFENMGAQMVKEVASKANDAAGDGTTTATLLAQSIVNEGLKAVAAGMNPMDLKRGIDKAVISAVEELKHLSVPCSDSKAITQVGTISANADEKVGSLIAEAMEKVGNDGVITVEEGTGLQDELEVVKGMQFDRGYLSPYFINKPETGIVELENPYILMADKKISNVREMLPILESVAKSGKPLLIISEDLEGEALATLVVNSMRGIVKVAAVKAPGFGDRRKAMLQDISILTGGSVISEELAMELEKSTLEDLGQAKRVVISKDTTTIIGGVGEKHSIQSRISQIRQEIQEATSDYDKEKLNERLAKLSGGVAVLKVGAATEVEMKEKKARVEDALHATRAAVEEGVVAGGGVALVRVAGKIADLRGQNEDQNVGIRVALRAMEAPLRQIVSNSGEEPSVVTNNVKDGKGNYGYNAATDKYGDMIDFGILDPTKVTRSALQYAASVAGLMITTECMVTDLPKEDKSSDSSSSPAGGMGGMGGMM.

ATP-binding positions include 30-33, K51, 87-91, G415, 479-481, and D495; these read TLGP, DGTTT, and NAA. The tract at residues 524-548 is disordered; the sequence is LPKEDKSSDSSSSPAGGMGGMGGMM. The segment covering 539–548 has biased composition (gly residues); the sequence is GGMGGMGGMM.

It belongs to the chaperonin (HSP60) family. As to quaternary structure, forms a cylinder of 14 subunits composed of two heptameric rings stacked back-to-back. Interacts with the co-chaperonin GroES.

It is found in the cytoplasm. The catalysed reaction is ATP + H2O + a folded polypeptide = ADP + phosphate + an unfolded polypeptide.. Functionally, together with its co-chaperonin GroES, plays an essential role in assisting protein folding. The GroEL-GroES system forms a nano-cage that allows encapsulation of the non-native substrate proteins and provides a physical environment optimized to promote and accelerate protein folding. The sequence is that of Chaperonin GroEL from Buchnera aphidicola subsp. Acyrthosiphon pisum (strain Tuc7).